The sequence spans 138 residues: MLQPKRTKYRKPHNVSYEGHTKGNGYVAFGEYGIVATKGNWIDARAIESARVAISKCLGKTGKMWIRIFPHMSKTKKPLEVRMGSGKGNPEFWVAVVKKGTVMFEVANIPEQQMIKALTRAGHKLPVTWKLMKREENS.

Belongs to the universal ribosomal protein uL16 family. As to quaternary structure, part of the 50S ribosomal subunit.

Functionally, binds 23S rRNA and is also seen to make contacts with the A and possibly P site tRNAs. The sequence is that of Large ribosomal subunit protein uL16 from Mycoplasma genitalium (strain ATCC 33530 / DSM 19775 / NCTC 10195 / G37) (Mycoplasmoides genitalium).